Reading from the N-terminus, the 89-residue chain is Insulin (89 aa).

3 cysteine pairs are disulfide-bonded: Cys7-Cys75, Cys19-Cys88, and Cys74-Cys79. The propeptide at 33–66 (DVGPLSAFRDLEPPLDTEMEDRFPYRQQLAGSKM) is c peptide.

Belongs to the insulin family. In terms of assembly, heterodimer of a B chain and an A chain linked by two disulfide bonds.

The protein resides in the secreted. Its function is as follows. Insulin decreases blood glucose concentration. It increases cell permeability to monosaccharides, amino acids and fatty acids. It accelerates glycolysis, the pentose phosphate cycle, and glycogen synthesis in liver. The sequence is that of Insulin (ins) from Callorhinchus milii (Ghost shark).